Here is a 603-residue protein sequence, read N- to C-terminus: Serine/threonine-protein kinase PLK1 (603 aa).

A compositionally biased stretch (low complexity) spans 1–15 (MNAAAKAGKLARAPA). The interval 1-32 (MNAAAKAGKLARAPADLGKGGVPGDAAPGAPG) is disordered. Lys19 is covalently cross-linked (Glycyl lysine isopeptide (Lys-Gly) (interchain with G-Cter in ubiquitin)). A Protein kinase domain is found at 53 to 305 (YVRGRFLGKG…IHELLNDEFF (253 aa)). ATP contacts are provided by residues 59-67 (LGKGGFAKC) and Lys82. Phosphoserine is present on Ser103. Glu131 provides a ligand contact to ATP. Ser137 bears the Phosphoserine mark. Catalysis depends on Asp176, which acts as the Proton acceptor. Residues 178–181 (KLGN) and Asp194 contribute to the ATP site. Residues 194 to 221 (DFGLATKVEYEGERKKTLCGTPNYIAPE) are activation loop. Thr210 is subject to Phosphothreonine; by AURKA. At Thr214 the chain carries Phosphothreonine. Residues Ser269 and Ser335 each carry the phosphoserine; by autocatalysis modification. The D-box that targets the protein for proteasomal degradation in anaphase signature appears at 337–340 (RKPL). Lys338 participates in a covalent cross-link: Glycyl lysine isopeptide (Lys-Gly) (interchain with G-Cter in SUMO2). Residues 338–361 (KPLTVLNKGVENPLPDRPREKEEP) are disordered. The span at 351–361 (LPDRPREKEEP) shows a compositional bias: basic and acidic residues. Residues Ser375 and Ser450 each carry the phosphoserine modification. Residues 410 to 488 (WVSKWVDYSD…LNYFRNYMSE (79 aa)) enclose the POLO box 1 domain. Lys492 is covalently cross-linked (Glycyl lysine isopeptide (Lys-Gly) (interchain with G-Cter in ubiquitin)). The segment at 493–507 (AGANITPREGDELAR) is linker. Phosphothreonine is present on Thr498. The 83-residue stretch at 510-592 (YLRTWFRTRS…ARTMVDKLLS (83 aa)) folds into the POLO box 2 domain. The segment at 538-540 (HTK) is important for interaction with phosphorylated proteins.

This sequence belongs to the protein kinase superfamily. Ser/Thr protein kinase family. CDC5/Polo subfamily. In terms of assembly, interacts with CEP170 and EVI5. Interacts and phosphorylates ERCC6L. Interacts with FAM29A. Interacts with SLX4/BTBD12 and TTDN1. Interacts with BUB1B. Interacts (via POLO-box domain) with the phosphorylated form of BUB1, CENPU and CDC25C. Interacts with isoform 3 of SGO1. Interacts with BORA, KIF2A and AURKA. Interacts with TOPORS and CYLD. Interacts with ECT2; the interaction is stimulated upon phosphorylation of ECT2 on 'Thr-444'. Interacts with PRC1. Interacts with KIF20A/MKLP2 (when phosphorylated), leading to the recruitment at the central spindle. Interacts (via POLO box domains) with PPP1R12A/MYPT1 (when previously phosphorylated by CDK1). Part of an astrin (SPAG5)-kinastrin (SKAP) complex containing KNSTRN, SPAG5, PLK1, DYNLL1 and SGO2. Interacts with BIRC6/bruce. Interacts with CDK1-phosphorylated FRY; this interaction occurs in mitotic cells, but not in interphase cells. FRY interaction facilitates AURKA-mediated PLK1 phosphorylation. Interacts with CDK1-phosphorylated DCTN6 during mitotic prometaphase; the interaction facilitates recruitment to kinetochores. Interacts with CEP68; the interaction phosphorylates CEP68. Interacts (via POLO-box domain) with DCTN1. Interacts with CEP20 in later G1, S, G2 and M phases of the cell cycle; this interaction recruits PLK1 to centrosomes, a step required for S phase progression. Interacts with HSF1; this interaction increases upon heat shock but does not modulate neither HSF1 homotrimerization nor DNA-binding activities. Interacts with HNRNPU; this interaction induces phosphorylation of HNRNPU in mitosis. Interacts (via its N-terminus) with RIOK2. Interacts with KLHL22. Interacts (via POLO box domains) with NEDD9/HEF1 (via C-terminus). Interacts (via RVxF motif) with FIRRM; regulates PLK1 kinase activity. Interacts with SKA3; the interaction promotes the stability of PLK1. Interacts with the MTMR3:MTMR4 heterooligomer; brings CEP55 and PLK1 together during early mitosis, regulating the phosphorylation of CEP55 by PLK1 and its recruitment to the midbody where it can mediate cell abscission. Catalytic activity is enhanced by phosphorylation of Thr-210. Phosphorylation at Thr-210 is first detected on centrosomes in the G2 phase of the cell cycle, peaks in prometaphase and gradually disappears from centrosomes during anaphase. Dephosphorylation at Thr-210 at centrosomes is probably mediated by protein phosphatase 1C (PP1C), via interaction with PPP1R12A/MYPT1. Autophosphorylation and phosphorylation of Ser-137 may not be significant for the activation of PLK1 during mitosis, but may enhance catalytic activity during recovery after DNA damage checkpoint. Phosphorylated in vitro by STK10. Post-translationally, ubiquitinated by the anaphase promoting complex/cyclosome (APC/C) in anaphase and following DNA damage, leading to its degradation by the proteasome. Ubiquitination is mediated via its interaction with FZR1/CDH1. Ubiquitination and subsequent degradation prevents entry into mitosis and is essential to maintain an efficient G2 DNA damage checkpoint. Monoubiquitination at Lys-492 by the BCR(KLHL22) ubiquitin ligase complex does not lead to degradation: it promotes PLK1 dissociation from phosphoreceptor proteins and subsequent removal from kinetochores, allowing silencing of the spindle assembly checkpoint (SAC) and chromosome segregation.

It is found in the nucleus. It localises to the chromosome. The protein resides in the centromere. Its subcellular location is the kinetochore. The protein localises to the cytoplasm. It is found in the cytoskeleton. It localises to the microtubule organizing center. The protein resides in the centrosome. Its subcellular location is the spindle. The protein localises to the midbody. It catalyses the reaction L-seryl-[protein] + ATP = O-phospho-L-seryl-[protein] + ADP + H(+). The catalysed reaction is L-threonyl-[protein] + ATP = O-phospho-L-threonyl-[protein] + ADP + H(+). Its activity is regulated as follows. Activated by phosphorylation of Thr-210 by AURKA; phosphorylation by AURKA is enhanced by BORA. Once activated, activity is stimulated by binding target proteins. Binding of target proteins has no effect on the non-activated kinase. Several inhibitors targeting PLKs are currently in development and are under investigation in a growing number of clinical trials, such as BI 2536, an ATP-competitive PLK1 inhibitor or BI 6727, a dihydropteridinone that specifically inhibits the catalytic activity of PLK1. Functionally, serine/threonine-protein kinase that performs several important functions throughout M phase of the cell cycle, including the regulation of centrosome maturation and spindle assembly, the removal of cohesins from chromosome arms, the inactivation of anaphase-promoting complex/cyclosome (APC/C) inhibitors, and the regulation of mitotic exit and cytokinesis. Polo-like kinase proteins act by binding and phosphorylating proteins that are already phosphorylated on a specific motif recognized by the POLO box domains. Phosphorylates BORA, BUB1B/BUBR1, CCNB1, CDC25C, CEP55, ECT2, ERCC6L, FBXO5/EMI1, FOXM1, KIF20A/MKLP2, CENPU, NEDD1, NINL, NPM1, NUDC, PKMYT1/MYT1, KIZ, PPP1R12A/MYPT1, PRC1, RACGAP1/CYK4, RHNO1, SGO1, STAG2/SA2, TEX14, TOPORS, p73/TP73, TPT1, WEE1 and HNRNPU. Plays a key role in centrosome functions and the assembly of bipolar spindles by phosphorylating KIZ, NEDD1 and NINL. NEDD1 phosphorylation promotes subsequent targeting of the gamma-tubulin ring complex (gTuRC) to the centrosome, an important step for spindle formation. Phosphorylation of NINL component of the centrosome leads to NINL dissociation from other centrosomal proteins. Involved in mitosis exit and cytokinesis by phosphorylating CEP55, ECT2, KIF20A/MKLP2, CENPU, PRC1 and RACGAP1. Recruited at the central spindle by phosphorylating and docking PRC1 and KIF20A/MKLP2; creates its own docking sites on PRC1 and KIF20A/MKLP2 by mediating phosphorylation of sites subsequently recognized by the POLO box domains. Phosphorylates RACGAP1, thereby creating a docking site for the Rho GTP exchange factor ECT2 that is essential for the cleavage furrow formation. Promotes the central spindle recruitment of ECT2. Plays a central role in G2/M transition of mitotic cell cycle by phosphorylating CCNB1, CDC25C, FOXM1, CENPU, PKMYT1/MYT1, PPP1R12A/MYPT1 and WEE1. Part of a regulatory circuit that promotes the activation of CDK1 by phosphorylating the positive regulator CDC25C and inhibiting the negative regulators WEE1 and PKMYT1/MYT1. Also acts by mediating phosphorylation of cyclin-B1 (CCNB1) on centrosomes in prophase. Phosphorylates FOXM1, a key mitotic transcription regulator, leading to enhance FOXM1 transcriptional activity. Involved in kinetochore functions and sister chromatid cohesion by phosphorylating BUB1B/BUBR1, FBXO5/EMI1 and STAG2/SA2. PLK1 is high on non-attached kinetochores suggesting a role of PLK1 in kinetochore attachment or in spindle assembly checkpoint (SAC) regulation. Required for kinetochore localization of BUB1B. Regulates the dissociation of cohesin from chromosomes by phosphorylating cohesin subunits such as STAG2/SA2. Phosphorylates SGO1: required for spindle pole localization of isoform 3 of SGO1 and plays a role in regulating its centriole cohesion function. Mediates phosphorylation of FBXO5/EMI1, a negative regulator of the APC/C complex during prophase, leading to FBXO5/EMI1 ubiquitination and degradation by the proteasome. Acts as a negative regulator of p53 family members: phosphorylates TOPORS, leading to inhibit the sumoylation of p53/TP53 and simultaneously enhance the ubiquitination and subsequent degradation of p53/TP53. Phosphorylates the transactivation domain of the transcription factor p73/TP73, leading to inhibit p73/TP73-mediated transcriptional activation and pro-apoptotic functions. Phosphorylates BORA, and thereby promotes the degradation of BORA. Contributes to the regulation of AURKA function. Also required for recovery after DNA damage checkpoint and entry into mitosis. Phosphorylates MISP, leading to stabilization of cortical and astral microtubule attachments required for proper spindle positioning. Together with MEIKIN, acts as a regulator of kinetochore function during meiosis I: required both for mono-orientation of kinetochores on sister chromosomes and protection of centromeric cohesin from separase-mediated cleavage. Phosphorylates CEP68 and is required for its degradation. Regulates nuclear envelope breakdown during prophase by phosphorylating DCTN1 resulting in its localization in the nuclear envelope. Phosphorylates the heat shock transcription factor HSF1, promoting HSF1 nuclear translocation upon heat shock. Phosphorylates HSF1 also in the early mitotic period; this phosphorylation regulates HSF1 localization to the spindle pole, the recruitment of the SCF(BTRC) ubiquitin ligase complex induicing HSF1 degradation, and hence mitotic progression. Regulates mitotic progression by phosphorylating RIOK2. Through the phosphorylation of DZIP1 regulates the localization during mitosis of the BBSome, a ciliary protein complex involved in cilium biogenesis. Regulates DNA repair during mitosis by mediating phosphorylation of POLQ and RHNO1, thereby promoting POLQ recruitment to DNA damage sites. Phosphorylates ATXN10 which may play a role in the regulation of cytokinesis and may stimulate the proteasome-mediated degradation of ATXN10. This is Serine/threonine-protein kinase PLK1 (Plk1) from Rattus norvegicus (Rat).